Reading from the N-terminus, the 239-residue chain is tRNA (guanine-N(7)-)-methyltransferase (239 aa).

Residues Glu-69, Glu-94, Asp-121, and Asp-144 each contribute to the S-adenosyl-L-methionine site. The active site involves Asp-144. Lys-148 serves as a coordination point for substrate. The interval 150 to 155 (RHNKRR) is interaction with RNA. Substrate contacts are provided by residues Asp-180 and 217–220 (TKFE).

Belongs to the class I-like SAM-binding methyltransferase superfamily. TrmB family. Monomer.

It carries out the reaction guanosine(46) in tRNA + S-adenosyl-L-methionine = N(7)-methylguanosine(46) in tRNA + S-adenosyl-L-homocysteine. It participates in tRNA modification; N(7)-methylguanine-tRNA biosynthesis. Functionally, catalyzes the formation of N(7)-methylguanine at position 46 (m7G46) in tRNA. This is tRNA (guanine-N(7)-)-methyltransferase from Salmonella paratyphi A (strain ATCC 9150 / SARB42).